Consider the following 87-residue polypeptide: Small ribosomal subunit protein uS15 (87 aa).

The protein belongs to the universal ribosomal protein uS15 family. As to quaternary structure, part of the 30S ribosomal subunit. Forms a bridge to the 50S subunit in the 70S ribosome, contacting the 23S rRNA.

Functionally, one of the primary rRNA binding proteins, it binds directly to 16S rRNA where it helps nucleate assembly of the platform of the 30S subunit by binding and bridging several RNA helices of the 16S rRNA. Its function is as follows. Forms an intersubunit bridge (bridge B4) with the 23S rRNA of the 50S subunit in the ribosome. The chain is Small ribosomal subunit protein uS15 from Clostridium beijerinckii (strain ATCC 51743 / NCIMB 8052) (Clostridium acetobutylicum).